Consider the following 314-residue polypeptide: Hydroxyacyl-coenzyme A dehydrogenase, mitochondrial (314 aa).

The transit peptide at 1–12 (MAFVTRQFLRSM) directs the protein to the mitochondrion. NAD(+) contacts are provided by residues 34–39 (GGGLMG) and D57. S73 is a binding site for CoA. K75 bears the N6-acetyllysine mark. Residue K80 coordinates CoA. K80 carries the N6-succinyllysine modification. An N6-acetyllysine; alternate mark is found at K81 and K87. N6-succinyllysine; alternate occurs at positions 81 and 87. Residue E122 participates in NAD(+) binding. At K125 the chain carries N6-acetyllysine. K127 lines the NAD(+) pocket. An N6-(2-hydroxyisobutyryl)lysine modification is found at K127. K136 is modified (N6-acetyllysine; alternate). K136 bears the N6-succinyllysine; alternate mark. Residues S149 and N173 each coordinate NAD(+). S149 contacts CoA. K179 carries the post-translational modification N6-acetyllysine. N6-acetyllysine; alternate is present on residues K185, K192, and K202. An N6-succinyllysine; alternate mark is found at K185, K192, and K202. Residue K206 is modified to N6-succinyllysine. 2 positions are modified to N6-acetyllysine; alternate: K212 and K241. An N6-succinyllysine; alternate mark is found at K212 and K241. K305 lines the NAD(+) pocket. K312 carries the post-translational modification N6-acetyllysine; alternate. Residue K312 is modified to N6-succinyllysine; alternate.

It belongs to the 3-hydroxyacyl-CoA dehydrogenase family. Homodimer. Interacts with GLUD1; this interaction inhibits the activation of glutamate dehydrogenase 1 (GLUD1). Post-translationally, succinylation at Lys-81, adjacent to a coenzyme A binding site. Desuccinylated by SIRT5. As to expression, expressed in liver, kidney, brain, and pancreatic islets.

It localises to the mitochondrion matrix. Its subcellular location is the nucleus. It is found in the cytoplasm. The protein localises to the cytosol. The enzyme catalyses a (3S)-3-hydroxyacyl-CoA + NAD(+) = a 3-oxoacyl-CoA + NADH + H(+). It carries out the reaction (3S)-3-hydroxybutanoyl-CoA + NAD(+) = acetoacetyl-CoA + NADH + H(+). It catalyses the reaction (3S)-hydroxydecanoyl-CoA + NAD(+) = 3-oxodecanoyl-CoA + NADH + H(+). The catalysed reaction is (3S)-hydroxyhexadecanoyl-CoA + NAD(+) = 3-oxohexadecanoyl-CoA + NADH + H(+). It participates in lipid metabolism; fatty acid beta-oxidation. Functionally, mitochondrial fatty acid beta-oxidation enzyme that catalyzes the third step of the beta-oxidation cycle for medium and short-chain 3-hydroxy fatty acyl-CoAs (C4 to C10). Plays a role in the control of insulin secretion by inhibiting the activation of glutamate dehydrogenase 1 (GLUD1), an enzyme that has an important role in regulating amino acid-induced insulin secretion. Plays a role in the maintenance of normal spermatogenesis through the reduction of fatty acid accumulation in the testes. Its function is as follows. Inhibits cell proliferation. The polypeptide is Hydroxyacyl-coenzyme A dehydrogenase, mitochondrial (Hadh) (Mus musculus (Mouse)).